The following is a 234-amino-acid chain: MQQGQMAYDRAITVFSPDGRLFQVEYAREAVKKGSTALGIKFKDGVALISEKKVRSRLVEKTSLEKIQLIDDRVAAVTSGLVADARVLIDFARISDQQEKVTYGSLMNIENLVKRVADQMQQYTQYGGVRPYGVSIIFAGLDSIGPRLFDCDPAGTINEYKCVSIGAGKDQVTAYLEKEYKENLSEDEAIRMGIAALKSAVADESSMKEPEIASIKMGETFHVFTSEEVSKYLN.

It belongs to the peptidase T1A family. The 20S proteasome core is composed of 14 alpha and 14 beta subunits that assemble into four stacked heptameric rings, resulting in a barrel-shaped structure. The two inner rings, each composed of seven catalytic beta subunits, are sandwiched by two outer rings, each composed of seven alpha subunits. The catalytic chamber with the active sites is on the inside of the barrel. Has a gated structure, the ends of the cylinder being occluded by the N-termini of the alpha-subunits. Is capped at one or both ends by the proteasome regulatory ATPase, PAN.

Its subcellular location is the cytoplasm. The formation of the proteasomal ATPase PAN-20S proteasome complex, via the docking of the C-termini of PAN into the intersubunit pockets in the alpha-rings, triggers opening of the gate for substrate entry. Interconversion between the open-gate and close-gate conformations leads to a dynamic regulation of the 20S proteasome proteolysis activity. Functionally, component of the proteasome core, a large protease complex with broad specificity involved in protein degradation. The protein is Proteasome subunit alpha of Picrophilus torridus (strain ATCC 700027 / DSM 9790 / JCM 10055 / NBRC 100828 / KAW 2/3).